Consider the following 292-residue polypeptide: Ribosomal protein L11 methyltransferase (292 aa).

Residues threonine 143, glycine 164, aspartate 186, and asparagine 228 each coordinate S-adenosyl-L-methionine.

Belongs to the methyltransferase superfamily. PrmA family.

The protein resides in the cytoplasm. The enzyme catalyses L-lysyl-[protein] + 3 S-adenosyl-L-methionine = N(6),N(6),N(6)-trimethyl-L-lysyl-[protein] + 3 S-adenosyl-L-homocysteine + 3 H(+). Its function is as follows. Methylates ribosomal protein L11. This is Ribosomal protein L11 methyltransferase from Aeromonas salmonicida (strain A449).